The sequence spans 509 residues: Zinc finger protein CKR1 (509 aa).

A KRAB domain is found at 1 to 61 (MEPYVLLDPR…GSEEPQTHPP (61 aa)). 2 stretches are compositionally biased toward basic and acidic residues: residues 41-50 (EDAVGLKEDA) and 98-112 (PKRDGVKPSRVRDRP). The tract at residues 41–114 (EDAVGLKEDA…PSRVRDRPFG (74 aa)) is disordered. 11 consecutive C2H2-type zinc fingers follow at residues 113–135 (FGCPDCGKSFPWASHLERHRRVH), 141–163 (YSCPECGESYSQSSHLVQHRRTH), 169–191 (HKCQHCGKPFAGAAQLLAHSRGH), 197–219 (HRCGDCGKGFVWASHLERHRRVH), 225–247 (YECPECGEAFSQGSHLTKHRRSH), 279–303 (QRCAECGKAFRAAPPLRRHRRERSH), 303–325 (HRCGDCGKGFAWASHLQRHRRVH), 331–353 (FPCGLCGERFSQKAHLLQHGKTH), 359–383 (YKCGDCGKRFENAPPFLAHRRGHAA), 387–409 (FTCGDCGKGFAWASHLQRHRRVH), and 415–437 (YECPECGEAFSQGSHLTKHRRSH). Residues 428-479 (SHLTKHRRSHGPKAPLLPVQGRGEAGEPLRASPLSSGAEQRDGRRAQRGGVE) are disordered.

Belongs to the krueppel C2H2-type zinc-finger protein family.

It is found in the nucleus. The sequence is that of Zinc finger protein CKR1 from Gallus gallus (Chicken).